The sequence spans 729 residues: Polyribonucleotide nucleotidyltransferase (729 aa).

The disordered stretch occupies residues 399–419 (YMHNYNFPPYSTGETGRVGSP). Positions 509 and 515 each coordinate Mg(2+). The 60-residue stretch at 575 to 634 (PRVISVKIPVDKIGEVIGPKGKMINQIQADSGAEITVEDDGTIYIGAADGPAAETARSAI) folds into the KH domain. The region spanning 646 to 718 (GERYLGTIVK…ARGKISLAPG (73 aa)) is the S1 motif domain.

Belongs to the polyribonucleotide nucleotidyltransferase family. The cofactor is Mg(2+).

It localises to the cytoplasm. It catalyses the reaction RNA(n+1) + phosphate = RNA(n) + a ribonucleoside 5'-diphosphate. Its function is as follows. Involved in mRNA degradation. Catalyzes the phosphorolysis of single-stranded polyribonucleotides processively in the 3'- to 5'-direction. The sequence is that of Polyribonucleotide nucleotidyltransferase from Parafrankia sp. (strain EAN1pec).